Reading from the N-terminus, the 73-residue chain is UPF0154 protein PEPE_0872 (73 aa).

Residues 5–25 (IWIMIVIIALLVGAVGGFFFA) traverse the membrane as a helical segment.

Belongs to the UPF0154 family.

It localises to the cell membrane. The sequence is that of UPF0154 protein PEPE_0872 from Pediococcus pentosaceus (strain ATCC 25745 / CCUG 21536 / LMG 10740 / 183-1w).